The chain runs to 141 residues: 3-hydroxyacyl-[acyl-carrier-protein] dehydratase FabZ (141 aa).

The active site involves histidine 49.

This sequence belongs to the thioester dehydratase family. FabZ subfamily.

It is found in the cytoplasm. It carries out the reaction a (3R)-hydroxyacyl-[ACP] = a (2E)-enoyl-[ACP] + H2O. In terms of biological role, involved in unsaturated fatty acids biosynthesis. Catalyzes the dehydration of short chain beta-hydroxyacyl-ACPs and long chain saturated and unsaturated beta-hydroxyacyl-ACPs. This chain is 3-hydroxyacyl-[acyl-carrier-protein] dehydratase FabZ, found in Clostridium acetobutylicum (strain ATCC 824 / DSM 792 / JCM 1419 / IAM 19013 / LMG 5710 / NBRC 13948 / NRRL B-527 / VKM B-1787 / 2291 / W).